Consider the following 432-residue polypeptide: Glutamyl-tRNA reductase (432 aa).

Substrate is bound by residues 49-52 (TCNR), serine 109, 114-116 (EGQ), and glutamine 120. Cysteine 50 acts as the Nucleophile in catalysis. 189–194 (GAGKMS) contacts NADP(+).

It belongs to the glutamyl-tRNA reductase family. As to quaternary structure, homodimer.

It carries out the reaction (S)-4-amino-5-oxopentanoate + tRNA(Glu) + NADP(+) = L-glutamyl-tRNA(Glu) + NADPH + H(+). The protein operates within porphyrin-containing compound metabolism; protoporphyrin-IX biosynthesis; 5-aminolevulinate from L-glutamyl-tRNA(Glu): step 1/2. Its pathway is porphyrin-containing compound metabolism; chlorophyll biosynthesis. Functionally, catalyzes the NADPH-dependent reduction of glutamyl-tRNA(Glu) to glutamate 1-semialdehyde (GSA). In Cyanothece sp. (strain PCC 7425 / ATCC 29141), this protein is Glutamyl-tRNA reductase.